A 73-amino-acid polypeptide reads, in one-letter code: Beta-defensin 108B (73 aa).

The N-terminal stretch at 1 to 22 (MRIAVLLFAIFFFMSQVLPARG) is a signal peptide. Cystine bridges form between Cys28/Cys55, Cys35/Cys49, and Cys39/Cys56.

Belongs to the beta-defensin family. Specifically expressed in testis. Low expression is detected also in liver.

Its subcellular location is the secreted. Its function is as follows. Has antibacterial activity. The protein is Beta-defensin 108B (DEFB108B) of Homo sapiens (Human).